The primary structure comprises 107 residues: Nucleoid-associated protein NE0434 (107 aa).

It belongs to the YbaB/EbfC family. Homodimer.

The protein localises to the cytoplasm. It is found in the nucleoid. Its function is as follows. Binds to DNA and alters its conformation. May be involved in regulation of gene expression, nucleoid organization and DNA protection. This is Nucleoid-associated protein NE0434 from Nitrosomonas europaea (strain ATCC 19718 / CIP 103999 / KCTC 2705 / NBRC 14298).